The primary structure comprises 975 residues: E3 ubiquitin-protein ligase NEDD4-like (975 aa).

Ala-2 carries the post-translational modification N-acetylalanine. The 123-residue stretch at 4–126 (GLGEPVYGLS…TEDPTMERPY (123 aa)) folds into the C2 domain. 3 disordered regions span residues 178-202 (DSND…WEEK), 244-272 (AAHR…VPEP), and 285-312 (DSLG…EELS). The region spanning 193–226 (PPLPPGWEEKVDNLGRTYYVNHNNRTTQWHRPSL) is the WW 1 domain. The residue at position 312 (Ser-312) is a Phosphoserine. Thr-318 carries the post-translational modification Phosphothreonine. Position 342 is a phosphoserine; by WNK1 and WNK4 (Ser-342). Disordered regions lie at residues 349-393 (EQGH…GWEE) and 424-496 (GASG…KVTQ). Phosphothreonine; by SGK1 is present on Thr-367. Residues 385 to 418 (PGLPSGWEERKDAKGRTYYVNHNNRTTTWTRPIM) enclose the WW 2 domain. Position 446 is a phosphoserine (Ser-446). Position 448 is a phosphoserine; by PKA and SGK1 (Ser-448). At Ser-449 the chain carries Phosphoserine; by WNK1 and WNK4. A compositionally biased stretch (basic and acidic residues) spans 460-471 (GAKDSPVRRAVK). Ser-464, Ser-475, Ser-479, Ser-483, and Ser-487 each carry phosphoserine. WW domains lie at 497-530 (SFLP…DPRL) and 548-581 (GPLP…DPRL). One can recognise an HECT domain in the interval 640-974 (RPDVLKARLW…VENAQGFEGV (335 aa)). Catalysis depends on Cys-942, which acts as the Glycyl thioester intermediate.

As to quaternary structure, interacts with UBE2E3. Interacts with NDFIP1; this interaction activates the E3 ubiquitin-protein ligase. Interacts with NDFIP2; this interaction activates the E3 ubiquitin-protein ligase. Interacts (via WW domains) with SCN1A. Interacts (via WW domains) with SCN2A. Interacts (via WW domains) with SCN3A. Interacts (via WW domains) with SCN5A. Interacts (via WW domains) with SCN8A. Interacts (via WW domains) with SCN9A. Interacts (via WW domains) with SCN10A. Interacts (via WW domains) with CLCN5. Interacts with SMAD2. Interacts with SMAD3. Interacts with SMAD6. Interacts with SMAD7. The phosphorylated form interacts with 14-3-3 proteins. Interacts with TNK2. Interacts with WNK1. Interacts with SGK1. Interacts (via C2 domain) with NPC2. Interacts with ARRDC4. Interacts with KCNQ1; promotes internalization of KCNQ1. Interacts (via domains WW1, 3 and 4) with USP36; the interaction inhibits ubiquitination of, at least, NTRK1, KCNQ2 and KCNQ3 by NEDD4L. Interacts with PRRG4 (via cytoplasmic domain). Interacts with LDLRAD3; the interaction is direct. Interacts with UBE2D2. Interacts with TTYH2 and TTYH3. (Microbial infection) Interacts with Epstein-Barr virus LMP2A. Post-translationally, phosphorylated by SGK1 or PKA; which impairs interaction with SCNN. Interaction with YWHAH inhibits dephosphorylation. Auto-ubiquitinated. Deubiquitinated by USP36, no effect on NEDD4L protein levels. Both proteins interact and regulate each other's ubiquitination levels. In terms of tissue distribution, ubiquitously expressed, with highest levels in prostate, pancreas, and kidney. Expressed in melanocytes.

Its subcellular location is the cytoplasm. The protein resides in the golgi apparatus. The protein localises to the endosome. It localises to the multivesicular body. The enzyme catalyses S-ubiquitinyl-[E2 ubiquitin-conjugating enzyme]-L-cysteine + [acceptor protein]-L-lysine = [E2 ubiquitin-conjugating enzyme]-L-cysteine + N(6)-ubiquitinyl-[acceptor protein]-L-lysine.. It carries out the reaction [E2 ubiquitin-conjugating enzyme]-S-ubiquitinyl-L-cysteine + [acceptor protein]-L-cysteine = [E2 ubiquitin-conjugating enzyme]-L-cysteine + [acceptor protein]-S-ubiquitinyl-L-cysteine.. Its pathway is protein modification; protein ubiquitination. With respect to regulation, activated by NDFIP1- and NDFIP2-binding. In terms of biological role, E3 ubiquitin-protein ligase that mediates the polyubiquitination of lysine and cysteine residues on target proteins and is thereby implicated in the regulation of various signaling pathways including autophagy, innate immunity or DNA repair. Inhibits TGF-beta signaling by triggering SMAD2 and TGFBR1 ubiquitination and proteasome-dependent degradation. Downregulates autophagy and cell growth by ubiquitinating and reducing cellular ULK1 or ASCT2 levels. Promotes ubiquitination and internalization of various plasma membrane channels such as ENaC, SCN2A/Nav1.2, SCN3A/Nav1.3, SCN5A/Nav1.5, SCN9A/Nav1.7, SCN10A/Nav1.8, KCNA3/Kv1.3, KCNH2, EAAT1, KCNQ2/Kv7.2, KCNQ3/Kv7.3 or CLC5. Promotes ubiquitination and degradation of SGK1 and TNK2. Ubiquitinates BRAT1 and this ubiquitination is enhanced in the presence of NDFIP1. Plays a role in dendrite formation by melanocytes. Involved in the regulation of TOR signaling. Ubiquitinates and regulates protein levels of NTRK1 once this one is activated by NGF. Plays a role in antiviral innate immunity by catalyzing 'Lys-29'-linked cysteine ubiquitination of TRAF3, resulting in enhanced 'Lys-48' and 'Lys-63'-linked ubiquitination of TRAF3. Ubiquitinates TTYH2 and TTYH3 and regulates protein levels of TTYH2. In Homo sapiens (Human), this protein is E3 ubiquitin-protein ligase NEDD4-like.